The primary structure comprises 179 residues: Adenine phosphoribosyltransferase (179 aa).

The protein belongs to the purine/pyrimidine phosphoribosyltransferase family. Homodimer.

The protein resides in the cytoplasm. It carries out the reaction AMP + diphosphate = 5-phospho-alpha-D-ribose 1-diphosphate + adenine. It functions in the pathway purine metabolism; AMP biosynthesis via salvage pathway; AMP from adenine: step 1/1. In terms of biological role, catalyzes a salvage reaction resulting in the formation of AMP, that is energically less costly than de novo synthesis. This is Adenine phosphoribosyltransferase from Gluconobacter oxydans (strain 621H) (Gluconobacter suboxydans).